The following is a 225-amino-acid chain: Membrane-spanning 4-domains subfamily A member 4D (225 aa).

Residues 1-42 lie on the Cytoplasmic side of the membrane; sequence MQGLAQTTMAVVPGGAPPSENSVIKSQMWNKNKEKFLKGEPK. The chain crosses the membrane as a helical span at residues 43-63; it reads VLGAIQVMIAFINFSLGIIII. The Extracellular segment spans residues 64-73; sequence LNRVSERFMS. A helical transmembrane segment spans residues 74-94; it reads VLLLAPFWGSIMFIFSGSLSI. Over 95–113 the chain is Cytoplasmic; that stretch reads AAGVKPTKAMIISSLSVNT. A helical membrane pass occupies residues 114–134; the sequence is ISSVLAVAASIIGVISVISGV. At 135-148 the chain is on the extracellular side; sequence FRQFRSQPAIASLD. The helical transmembrane segment at 149–169 threads the bilayer; sequence VLMTILNMLEFCIAVSVSAFG. The Cytoplasmic segment spans residues 170–225; that stretch reads CKASCCNSSEVLVVLPSNSAVTVTAPPMILQPLPPSECQGKNVPENLYRNQPGEIV.

The protein belongs to the MS4A family. Expressed in thymus, spleen, peripheral lymph node, liver, kidney, heart, colon, lung, and testes.

The protein resides in the membrane. May be involved in signal transduction as a component of a multimeric receptor complex. The sequence is that of Membrane-spanning 4-domains subfamily A member 4D (Ms4a4d) from Mus musculus (Mouse).